We begin with the raw amino-acid sequence, 571 residues long: MRASKYLFSTLKETPHHAKIISHQLMLKSGMIRKLSSGIYIWLPTGIRVLNKIKDIIKNEMRKINALEVLMPVVQPKKLWENSGRLSIYGEELFQFYDRRNQKFILGPTNEEVVTNFIRNEINSFKELPLIIYQIQTKFRDEIRPRFGIVRSREFIMKDAYSFHINKHCLEKTYNDFYQSYINIFNKIKIQFRAVNADSGSMGGSISHEFQALSENGEDEIVFSKNTAYASNINTAKSMQSINFLKEKNRIIPNQIKSKKCTKNFNEFKKPIKNFIKTILVRTKINNQPSLAALLIRQEHELNLFKIEEIDIIEKPLSFVNEEEIITLMGVKSKFLGPLGLKIPIFADVSVYYMKDFTIGSNINEKFFINVNWNVDLPIPIIKDIRNITKKDISSDGSKSLEIKKSIEIGHIFQLGKEYSKKMNVLVQEQHNNYKHIHMGCYGIGITRIVASVIEQNYDDNGIIWPDSIAPFQVVILPLNTKNCIKIKEITENLYKILKKEKIDVILYDRNERPGIMFNQIDLIGIPHQIIISPRHINENKVEYRERKNNKSTLIKVKEITYFLKKKLNLI.

This sequence belongs to the class-II aminoacyl-tRNA synthetase family. ProS type 1 subfamily. As to quaternary structure, homodimer.

Its subcellular location is the cytoplasm. The enzyme catalyses tRNA(Pro) + L-proline + ATP = L-prolyl-tRNA(Pro) + AMP + diphosphate. Catalyzes the attachment of proline to tRNA(Pro) in a two-step reaction: proline is first activated by ATP to form Pro-AMP and then transferred to the acceptor end of tRNA(Pro). As ProRS can inadvertently accommodate and process non-cognate amino acids such as alanine and cysteine, to avoid such errors it has two additional distinct editing activities against alanine. One activity is designated as 'pretransfer' editing and involves the tRNA(Pro)-independent hydrolysis of activated Ala-AMP. The other activity is designated 'posttransfer' editing and involves deacylation of mischarged Ala-tRNA(Pro). The misacylated Cys-tRNA(Pro) is not edited by ProRS. In Buchnera aphidicola subsp. Schizaphis graminum (strain Sg), this protein is Proline--tRNA ligase.